The primary structure comprises 100 residues: Small ribosomal subunit protein uS14 (100 aa).

Belongs to the universal ribosomal protein uS14 family. As to quaternary structure, part of the 30S ribosomal subunit. Contacts proteins S3 and S10.

In terms of biological role, binds 16S rRNA, required for the assembly of 30S particles and may also be responsible for determining the conformation of the 16S rRNA at the A site. The protein is Small ribosomal subunit protein uS14 of Rippkaea orientalis (strain PCC 8801 / RF-1) (Cyanothece sp. (strain PCC 8801)).